The chain runs to 280 residues: Probable cell division protein WhiA (280 aa).

Positions 246–279 (SLEQIAQFFERKYKVQITRSGIQHLNAKLKKLNQ) form a DNA-binding region, H-T-H motif.

This sequence belongs to the WhiA family.

In terms of biological role, involved in cell division and chromosome segregation. The chain is Probable cell division protein WhiA from Mycoplasma pneumoniae (strain ATCC 29342 / M129 / Subtype 1) (Mycoplasmoides pneumoniae).